A 154-amino-acid polypeptide reads, in one-letter code: L-alanine exporter AlaE (154 aa).

4 consecutive transmembrane segments (helical) span residues 21–41 (FAMVVYCTVVNMLIEIFLSGM), 51–71 (LVAIPVNILIACPYGIYRDFF), 90–110 (ILAYVTFQSPVYAAILWVIGA), and 115–135 (IVAAVSSNMVISMMMGAVYGY).

It belongs to the AlaE exporter family.

Its subcellular location is the cell inner membrane. Exports L-alanine. The polypeptide is L-alanine exporter AlaE (Escherichia fergusonii (strain ATCC 35469 / DSM 13698 / CCUG 18766 / IAM 14443 / JCM 21226 / LMG 7866 / NBRC 102419 / NCTC 12128 / CDC 0568-73)).